A 204-amino-acid chain; its full sequence is Large ribosomal subunit protein uL4 (204 aa).

Residues 53–77 (ISDVSGTTAKPYSQKRTGRARQGSL) form a disordered region. The segment covering 56 to 67 (VSGTTAKPYSQK) has biased composition (polar residues).

Belongs to the universal ribosomal protein uL4 family. In terms of assembly, part of the 50S ribosomal subunit.

Its function is as follows. One of the primary rRNA binding proteins, this protein initially binds near the 5'-end of the 23S rRNA. It is important during the early stages of 50S assembly. It makes multiple contacts with different domains of the 23S rRNA in the assembled 50S subunit and ribosome. Functionally, forms part of the polypeptide exit tunnel. The protein is Large ribosomal subunit protein uL4 of Wolbachia sp. subsp. Brugia malayi (strain TRS).